A 195-amino-acid polypeptide reads, in one-letter code: Ribosomal RNA small subunit methyltransferase G (195 aa).

S-adenosyl-L-methionine-binding positions include Gly-60, Leu-65, 114 to 115, and Arg-128; that span reads IE.

It belongs to the methyltransferase superfamily. RNA methyltransferase RsmG family.

The protein resides in the cytoplasm. The enzyme catalyses guanosine(527) in 16S rRNA + S-adenosyl-L-methionine = N(7)-methylguanosine(527) in 16S rRNA + S-adenosyl-L-homocysteine. Specifically methylates the N7 position of guanine in position 527 of 16S rRNA. In Dinoroseobacter shibae (strain DSM 16493 / NCIMB 14021 / DFL 12), this protein is Ribosomal RNA small subunit methyltransferase G.